We begin with the raw amino-acid sequence, 218 residues long: Glutathione S-transferase Mu 7 (218 aa).

A GST N-terminal domain is found at 1-88 (MPMTLGYWDI…YLGRKHNLCG (88 aa)). Residues 7–8 (YW), 46–50 (WLNEK), 59–60 (NL), and 72–73 (QS) each bind glutathione. In terms of domain architecture, GST C-terminal spans 90 to 208 (TEEERIRVDI…KTSRFLPRPM (119 aa)). Tyrosine 116 lines the substrate pocket.

It belongs to the GST superfamily. Mu family. As to quaternary structure, homodimer.

It localises to the cytoplasm. The enzyme catalyses RX + glutathione = an S-substituted glutathione + a halide anion + H(+). Conjugation of reduced glutathione to a wide number of exogenous and endogenous hydrophobic electrophiles. The chain is Glutathione S-transferase Mu 7 (Gstm7) from Mus musculus (Mouse).